We begin with the raw amino-acid sequence, 826 residues long: Golgin subfamily A member 6-like protein 25 (826 aa).

Disordered stretches follow at residues 1 to 100 (MWPQ…HQEA), 297 to 327 (QEQE…MRRQ), 345 to 425 (MHEQ…EMWR), 502 to 534 (QEEM…MWRQ), 547 to 646 (RQEE…EQEE), and 658 to 826 (QEEM…MQEH). Basic and acidic residues predominate over residues 31 to 52 (MSKETRQSKLAEAKEQLTDHHP). Polar residues-rich tracts occupy residues 53–63 (QTNPSVGTAAS) and 71–83 (NNGT…TSGG). Over residues 86-100 (SPEDEQKASHQHQEA) the composition is skewed to basic and acidic residues. Residues 157 to 822 (LEQALSAVAT…EVRLRQQEEK (666 aa)) are a coiled coil. 2 stretches are compositionally biased toward basic and acidic residues: residues 658-678 (QEEM…KMWE) and 686-826 (QEEK…MQEH).

The protein belongs to the GOLGA6 family.

This chain is Golgin subfamily A member 6-like protein 25, found in Homo sapiens (Human).